Reading from the N-terminus, the 172-residue chain is Protein LOL2 (172 aa).

Putative zinc finger stretches follow at residues 4–34 (QIVCHGCRNILLYPRGAPSVCCAVCHAVSST), 44–74 (HLICGGCRTLLMYTRNATSVRCSCCDTVNLV), and 82–112 (HLNCGQCQTVLMYPYGAPSVKCAICNFITNT).

It is found in the nucleus. In terms of biological role, putative zinc finger that may be involved in programmed cell death and defense response. The chain is Protein LOL2 (LOL2) from Oryza sativa subsp. japonica (Rice).